Here is a 554-residue protein sequence, read N- to C-terminus: Glucose-6-phosphate isomerase (554 aa).

Glutamate 358 acts as the Proton donor in catalysis. Residues histidine 389 and lysine 515 contribute to the active site. Positions 527–540 (ANNSPAPQSDSSTD) are enriched in polar residues. The segment at 527 to 554 (ANNSPAPQSDSSTDALVRRYRSERGRTS) is disordered. Positions 542-554 (LVRRYRSERGRTS) are enriched in basic and acidic residues.

It belongs to the GPI family.

The protein localises to the cytoplasm. It catalyses the reaction alpha-D-glucose 6-phosphate = beta-D-fructose 6-phosphate. Its pathway is carbohydrate biosynthesis; gluconeogenesis. It functions in the pathway carbohydrate degradation; glycolysis; D-glyceraldehyde 3-phosphate and glycerone phosphate from D-glucose: step 2/4. Catalyzes the reversible isomerization of glucose-6-phosphate to fructose-6-phosphate. The protein is Glucose-6-phosphate isomerase of Mycolicibacterium paratuberculosis (strain ATCC BAA-968 / K-10) (Mycobacterium paratuberculosis).